The primary structure comprises 101 residues: Venom protein 214 (101 aa).

The N-terminal stretch at 1-16 is a signal peptide; it reads MIRYVLVIITCFLVAA.

Post-translationally, contains 3 disulfide bonds. As to expression, expressed by the venom gland.

The protein resides in the secreted. The sequence is that of Venom protein 214 from Lychas mucronatus (Chinese swimming scorpion).